Reading from the N-terminus, the 1014-residue chain is UvrABC system protein A (1014 aa).

32-39 contacts ATP; the sequence is GLSGSGKS. 2 consecutive ABC transporter domains span residues 314-592 and 612-941; these read WSHG…AESQ and QDPS…KFLR. Residue 645-652 participates in ATP binding; the sequence is GVSGSGKS. The C4-type zinc-finger motif lies at 744–770; the sequence is CENCAGDGTIKIEMNFLPDVYVPCEVC. Residues 976-995 are compositionally biased toward low complexity; the sequence is TKTVTGTAAKKATATRTAKT. The tract at residues 976–1014 is disordered; the sequence is TKTVTGTAAKKATATRTAKTAVKKAAKPAAKKTTRTSKA. Over residues 996-1014 the composition is skewed to basic residues; it reads AVKKAAKPAAKKTTRTSKA.

This sequence belongs to the ABC transporter superfamily. UvrA family. Forms a heterotetramer with UvrB during the search for lesions.

The protein localises to the cytoplasm. In terms of biological role, the UvrABC repair system catalyzes the recognition and processing of DNA lesions. UvrA is an ATPase and a DNA-binding protein. A damage recognition complex composed of 2 UvrA and 2 UvrB subunits scans DNA for abnormalities. When the presence of a lesion has been verified by UvrB, the UvrA molecules dissociate. The chain is UvrABC system protein A from Streptomyces coelicolor (strain ATCC BAA-471 / A3(2) / M145).